The primary structure comprises 132 residues: Protein FasE (132 aa).

In Escherichia coli, this protein is Protein FasE (fasE).